The primary structure comprises 88 residues: Large ribosomal subunit protein bL31B (88 aa).

This sequence belongs to the bacterial ribosomal protein bL31 family. Type B subfamily. Part of the 50S ribosomal subunit.

In Corynebacterium diphtheriae (strain ATCC 700971 / NCTC 13129 / Biotype gravis), this protein is Large ribosomal subunit protein bL31B.